A 511-amino-acid chain; its full sequence is 2,3-bisphosphoglycerate-independent phosphoglycerate mutase (511 aa).

Mn(2+)-binding residues include Asp18 and Ser68. Ser68 (phosphoserine intermediate) is an active-site residue. Residues His129, 159 to 160 (RD), Arg191, Lys197, 261 to 264 (RSDR), and Lys329 each bind substrate. Residues Asp396, His400, Asp437, His438, and His459 each coordinate Mn(2+). The tract at residues 442–464 (ERMTKQAPDGSVRPYGGHTTNPV) is disordered.

It belongs to the BPG-independent phosphoglycerate mutase family. As to quaternary structure, monomer. It depends on Mn(2+) as a cofactor.

The enzyme catalyses (2R)-2-phosphoglycerate = (2R)-3-phosphoglycerate. It functions in the pathway carbohydrate degradation; glycolysis; pyruvate from D-glyceraldehyde 3-phosphate: step 3/5. Its function is as follows. Catalyzes the interconversion of 2-phosphoglycerate and 3-phosphoglycerate. This chain is 2,3-bisphosphoglycerate-independent phosphoglycerate mutase, found in Streptomyces coelicolor (strain ATCC BAA-471 / A3(2) / M145).